The chain runs to 1059 residues: Protein OPAQUE10 (1059 aa).

A run of 7 repeats spans residues 269-342 (SLLE…KESC), 343-416 (SLLE…KESC), 417-490 (SPLE…KESC), 491-564 (SPLE…KESC), 565-638 (FPLE…KESC), 639-712 (SPLE…KESC), and 713-786 (SPLE…KESC). The tract at residues 269–786 (SLLEPEDSVN…SRPIHDKESC (518 aa)) is 7 X approximate repeats. The tract at residues 511–534 (FNDAPNKESEGYGESGRGKHGEKS) is disordered. Residues 515-534 (PNKESEGYGESGRGKHGEKS) show a composition bias toward basic and acidic residues. Disordered regions lie at residues 732–756 (QYSD…EEKS), 856–875 (ETLA…DTGT), and 889–998 (SVCS…SGKG). The span at 858–869 (LADHPKKEEAGL) shows a compositional bias: basic and acidic residues. 2 stretches are compositionally biased toward polar residues: residues 907 to 924 (DFSS…NTGG) and 945 to 958 (ASDS…PEAS). Positions 984-994 (TRGRPEGDAPR) are enriched in basic and acidic residues. The helical transmembrane segment at 1003–1023 (VAGGITLVGAVFFMFHLSAAL) threads the bilayer.

As to quaternary structure, homodimer. Interacts (via N-terminus) with FL1 (via C-terminus), HIP, 19 kDa alpha-zein (AC P06677), 22 kDa alpha-zein (AC O48966), 16 kDa gamma-zein (AC P08031) and 50 kDa gamma-zein (AC C0P381). In terms of tissue distribution, expressed in kernels.

The protein localises to the endoplasmic reticulum membrane. Its function is as follows. Cereal endosperm protein required for the ring-shaped distribution of 22 kDa alpha- and 16 kDa gamma-zeins in protein bodies. The sequence is that of Protein OPAQUE10 from Zea mays (Maize).